Consider the following 293-residue polypeptide: Bifunctional protein FolD (293 aa).

NADP(+) contacts are provided by residues 164 to 166 (GRS), Ser-193, and Thr-234.

The protein belongs to the tetrahydrofolate dehydrogenase/cyclohydrolase family. Homodimer.

It carries out the reaction (6R)-5,10-methylene-5,6,7,8-tetrahydrofolate + NADP(+) = (6R)-5,10-methenyltetrahydrofolate + NADPH. It catalyses the reaction (6R)-5,10-methenyltetrahydrofolate + H2O = (6R)-10-formyltetrahydrofolate + H(+). Its pathway is one-carbon metabolism; tetrahydrofolate interconversion. In terms of biological role, catalyzes the oxidation of 5,10-methylenetetrahydrofolate to 5,10-methenyltetrahydrofolate and then the hydrolysis of 5,10-methenyltetrahydrofolate to 10-formyltetrahydrofolate. In Bacteroides fragilis (strain ATCC 25285 / DSM 2151 / CCUG 4856 / JCM 11019 / LMG 10263 / NCTC 9343 / Onslow / VPI 2553 / EN-2), this protein is Bifunctional protein FolD.